A 228-amino-acid chain; its full sequence is Urease accessory protein UreF (228 aa).

Belongs to the UreF family. In terms of assembly, ureD, UreF and UreG form a complex that acts as a GTP-hydrolysis-dependent molecular chaperone, activating the urease apoprotein by helping to assemble the nickel containing metallocenter of UreC. The UreE protein probably delivers the nickel.

It localises to the cytoplasm. In terms of biological role, required for maturation of urease via the functional incorporation of the urease nickel metallocenter. This is Urease accessory protein UreF from Photorhabdus laumondii subsp. laumondii (strain DSM 15139 / CIP 105565 / TT01) (Photorhabdus luminescens subsp. laumondii).